A 74-amino-acid polypeptide reads, in one-letter code: MKTQIVILFISMIMLQMFVQIEGGFWGSLWEGVKSVVGKRGLRNLDDLDDLDLDHLFDSDVSDADLRLLKQMFR.

The first 23 residues, 1–23, serve as a signal peptide directing secretion; it reads MKTQIVILFISMIMLQMFVQIEG. A Valine amide modification is found at valine 37. Residues 41 to 74 constitute a propeptide that is removed on maturation; the sequence is GLRNLDDLDDLDLDHLFDSDVSDADLRLLKQMFR.

This sequence belongs to the non-disulfide-bridged peptide (NDBP) superfamily. Short antimicrobial peptide (group 4) family. Expressed by the venom gland.

It localises to the secreted. The protein localises to the target cell membrane. Its function is as follows. Antimicrobial peptide that is rapidly bactericidal against Gram-positive bacteria (MIC=12.5 ug/ml against S.aureus, and MIC=100 ug/ml against M.luteus). Is also active against clinical antibiotics-resistant bacterial strains. The sequence is that of Amphipathic peptide CT1 from Scorpiops tibetanus (Scorpion).